A 188-amino-acid chain; its full sequence is Ribosome hibernation promotion factor (188 aa).

The segment at 93–125 is disordered; the sequence is KTRVNRKKRKESEHEPFPATPETPPETAVDHDK.

Belongs to the HPF/YfiA ribosome-associated protein family. Long HPF subfamily. Interacts with 100S ribosomes.

It is found in the cytoplasm. In terms of biological role, required for dimerization of active 70S ribosomes into 100S ribosomes in stationary phase; 100S ribosomes are translationally inactive and sometimes present during exponential growth. The sequence is that of Ribosome hibernation promotion factor from Staphylococcus carnosus (strain TM300).